A 168-amino-acid polypeptide reads, in one-letter code: UPF0303 protein YE1367 (168 aa).

The protein belongs to the UPF0303 family.

The chain is UPF0303 protein YE1367 from Yersinia enterocolitica serotype O:8 / biotype 1B (strain NCTC 13174 / 8081).